The sequence spans 281 residues: Light-independent protochlorophyllide reductase iron-sulfur ATP-binding protein (281 aa).

ATP contacts are provided by residues 10–15 (GIGKST) and lysine 39. Serine 14 provides a ligand contact to Mg(2+). [4Fe-4S] cluster contacts are provided by cysteine 95 and cysteine 129. 180 to 181 (NR) contributes to the ATP binding site.

This sequence belongs to the NifH/BchL/ChlL family. As to quaternary structure, homodimer. Protochlorophyllide reductase is composed of three subunits; ChlL, ChlN and ChlB. Requires [4Fe-4S] cluster as cofactor.

It carries out the reaction chlorophyllide a + oxidized 2[4Fe-4S]-[ferredoxin] + 2 ADP + 2 phosphate = protochlorophyllide a + reduced 2[4Fe-4S]-[ferredoxin] + 2 ATP + 2 H2O. Its pathway is porphyrin-containing compound metabolism; chlorophyll biosynthesis (light-independent). Functionally, component of the dark-operative protochlorophyllide reductase (DPOR) that uses Mg-ATP and reduced ferredoxin to reduce ring D of protochlorophyllide (Pchlide) to form chlorophyllide a (Chlide). This reaction is light-independent. The L component serves as a unique electron donor to the NB-component of the complex, and binds Mg-ATP. The polypeptide is Light-independent protochlorophyllide reductase iron-sulfur ATP-binding protein (Thermosynechococcus vestitus (strain NIES-2133 / IAM M-273 / BP-1)).